Consider the following 566-residue polypeptide: Cyclin-dependent kinase-like 2 (566 aa).

The Protein kinase domain maps to 4 to 287 (YENLGLVGEG…CAELLHHDFF (284 aa)). ATP contacts are provided by residues 10-18 (VGEGSYGMV) and lysine 33. A [NKR]KIAxRE motif is present at residues 45–51 (KKIAMRE). Residue aspartate 126 is the Proton acceptor of the active site. Disordered regions lie at residues 307–334 (DARNISLSKKSQNRKKEKEKDDSLGEER) and 545–566 (QVSGSPLSDGSEADSPWMEHQH). The segment covering 320-334 (RKKEKEKDDSLGEER) has biased composition (basic and acidic residues).

It belongs to the protein kinase superfamily. CMGC Ser/Thr protein kinase family. CDC2/CDKX subfamily.

The protein resides in the cytoplasm. It localises to the nucleus. The catalysed reaction is L-seryl-[protein] + ATP = O-phospho-L-seryl-[protein] + ADP + H(+). The enzyme catalyses L-threonyl-[protein] + ATP = O-phospho-L-threonyl-[protein] + ADP + H(+). This is Cyclin-dependent kinase-like 2 from Oryctolagus cuniculus (Rabbit).